Here is a 247-residue protein sequence, read N- to C-terminus: Eukaryotic translation initiation factor 6 (247 aa).

Phosphoserine; by CK1 is present on residues Ser-174 and Ser-175.

It belongs to the eIF-6 family. In terms of assembly, monomer. Associates with the 60S ribosomal subunit. Phosphorylation at Ser-174 and Ser-175 promotes nuclear export.

Its subcellular location is the cytoplasm. The protein localises to the nucleus. It localises to the nucleolus. Functionally, binds to the 60S ribosomal subunit and prevents its association with the 40S ribosomal subunit to form the 80S initiation complex in the cytoplasm. Is also involved in ribosome biogenesis. Associates with pre-60S subunits in the nucleus and is involved in its nuclear export. This chain is Eukaryotic translation initiation factor 6 (tif6), found in Aspergillus oryzae (strain ATCC 42149 / RIB 40) (Yellow koji mold).